A 105-amino-acid polypeptide reads, in one-letter code: Cytochrome c-553-like (105 aa).

The first 29 residues, M1–A29, serve as a signal peptide directing secretion. Heme c-binding residues include C45, C48, H49, and M85.

Binds 1 heme c group covalently per subunit.

This is Cytochrome c-553-like (cytM) from Synechocystis sp. (strain ATCC 27184 / PCC 6803 / Kazusa).